A 178-amino-acid chain; its full sequence is uncharacterized protein (178 aa).

The N-terminal stretch at M1–G19 is a signal peptide.

This is an uncharacterized protein from Bacillus subtilis (strain 168).